A 379-amino-acid polypeptide reads, in one-letter code: Lipid-A-disaccharide synthase (379 aa).

The protein belongs to the LpxB family.

It catalyses the reaction a lipid X + a UDP-2-N,3-O-bis[(3R)-3-hydroxyacyl]-alpha-D-glucosamine = a lipid A disaccharide + UDP + H(+). It participates in bacterial outer membrane biogenesis; LPS lipid A biosynthesis. Condensation of UDP-2,3-diacylglucosamine and 2,3-diacylglucosamine-1-phosphate to form lipid A disaccharide, a precursor of lipid A, a phosphorylated glycolipid that anchors the lipopolysaccharide to the outer membrane of the cell. This chain is Lipid-A-disaccharide synthase, found in Aeromonas hydrophila subsp. hydrophila (strain ATCC 7966 / DSM 30187 / BCRC 13018 / CCUG 14551 / JCM 1027 / KCTC 2358 / NCIMB 9240 / NCTC 8049).